A 139-amino-acid chain; its full sequence is NADPH-dependent 7-cyano-7-deazaguanine reductase (139 aa).

The Thioimide intermediate role is filled by cysteine 34. Aspartate 41 acts as the Proton donor in catalysis. Residues 56–58 (VEL) and 75–76 (HE) each bind substrate.

It belongs to the GTP cyclohydrolase I family. QueF type 1 subfamily.

The protein localises to the cytoplasm. The enzyme catalyses 7-aminomethyl-7-carbaguanine + 2 NADP(+) = 7-cyano-7-deazaguanine + 2 NADPH + 3 H(+). Its pathway is tRNA modification; tRNA-queuosine biosynthesis. Functionally, catalyzes the NADPH-dependent reduction of 7-cyano-7-deazaguanine (preQ0) to 7-aminomethyl-7-deazaguanine (preQ1). The polypeptide is NADPH-dependent 7-cyano-7-deazaguanine reductase (Nitrosospira multiformis (strain ATCC 25196 / NCIMB 11849 / C 71)).